A 159-amino-acid chain; its full sequence is Putative pre-16S rRNA nuclease (159 aa).

Belongs to the YqgF nuclease family.

It localises to the cytoplasm. In terms of biological role, could be a nuclease involved in processing of the 5'-end of pre-16S rRNA. The protein is Putative pre-16S rRNA nuclease of Bartonella quintana (strain Toulouse) (Rochalimaea quintana).